Here is a 615-residue protein sequence, read N- to C-terminus: MHCMAVRHFAPSSSLSIFSSTNINNHFFGREIFTPKTSNITTKKSRSRPNCNPIQCSLAKSPSSDTSTIVRRSANYDPPIWSFDFIQSLPCKYKGEPYTSRSNKLKEEVKKMLVGMENSLVQLELIDTLQRLGISYHFENEIISILKEYFTNISTNKNPKYDLYATALEFRLLREYGYAIPQEIFNDFKDETGKFKASIKNDDIKGVLALYEASFYVKNGENILEEARVFTTEYLKRYVMMIDQNIILNDNMAILVRHALEMPLHWRTIRAEAKWFIEEYEKTQDKNGTLLEFAKLDFNMLQSIFQEDLKHVSRWWEHSELGKNKMVYARDRLVEAFLWQVGVRFEPQFSHFRRISARIYALITIIDDIYDVYGTLEELELFTKAVERWDAKTIHELPDYMKLPFFTLFNTVNEMAYDVLEEHNFVTVEYLKNSWAELCRCYLEEAKWFYSGYKPTLKKYIENASLSIGGQIIFVYAFFSLTKSITNEALESLQEGHHAACRQGSLMLRLADDLGTLSDEMKRGDVPKSIQCYMHDTGASEDEAREHIKFLISEIWKEMNDEDEYNSIFSKEFVQACKNLGRMSLFMYQHGDGHASQDSHSRKRISDLIINPIPL.

The N-terminal 55 residues, 1-55 (MHCMAVRHFAPSSSLSIFSSTNINNHFFGREIFTPKTSNITTKKSRSRPNCNPIQ), are a transit peptide targeting the chloroplast. (2E)-geranyl diphosphate is bound by residues R330, D367, D371, R509, and D512. Mg(2+)-binding residues include D367 and D371. Positions 367–371 (DDIYD) match the DDXXD motif motif. Mg(2+) is bound by residues D512, T516, and E520.

Belongs to the terpene synthase family. Tpsb subfamily. Mg(2+) is required as a cofactor. It depends on Mn(2+) as a cofactor. K(+) serves as cofactor. As to expression, trichome.

The protein localises to the plastid. The protein resides in the chloroplast. The catalysed reaction is (2E)-geranyl diphosphate = (1R,5R)-alpha-pinene + diphosphate. The enzyme catalyses (2E)-geranyl diphosphate = (1R,5R)-beta-pinene + diphosphate. It carries out the reaction (2E)-geranyl diphosphate = (4S)-limonene + diphosphate. It catalyses the reaction (2E)-geranyl diphosphate = beta-myrcene + diphosphate. It participates in secondary metabolite biosynthesis; terpenoid biosynthesis. Its pathway is terpene metabolism; (-)-alpha-pinene biosynthesis; (-)-alpha-pinene from geranyl diphosphate: step 1/1. In terms of biological role, involved in monoterpene (C10) olefins biosynthesis, constituants of cannabinoids and terpenoids-rich resins. Catalyzes mainly the conversion of (2E)-geranyl diphosphate to (+)-alpha-pinene, and also produces minor products such as (-)-limonene, (+)-beta-pinene and beta-myrcene. The protein is (+)-alpha-pinene synthase TPS2, chloroplastic of Cannabis sativa (Hemp).